The following is a 50-amino-acid chain: Large ribosomal subunit protein eL39 (50 aa).

The protein belongs to the eukaryotic ribosomal protein eL39 family.

In Methanoculleus marisnigri (strain ATCC 35101 / DSM 1498 / JR1), this protein is Large ribosomal subunit protein eL39.